The primary structure comprises 158 residues: MATIEGTFEKSSSLKVAIVIARFNDLITNKLLSGCLDCLSRHGIDVSESSNQIDVAWVPGSFELPIISQELARTGKYEVLITLGAVIRGDTPHFDVVVSEASKGIATVSRETGVPIIFGVLTTDTMQQALERAGIKNNLGWSYALQALEMGSLMKAVT.

Residues phenylalanine 23, 61-63 (SFE), and 85-87 (AVI) contribute to the 5-amino-6-(D-ribitylamino)uracil site. (2S)-2-hydroxy-3-oxobutyl phosphate is bound at residue 90-91 (DT). The active-site Proton donor is histidine 93. Phenylalanine 118 is a binding site for 5-amino-6-(D-ribitylamino)uracil. Position 132 (arginine 132) interacts with (2S)-2-hydroxy-3-oxobutyl phosphate.

The protein belongs to the DMRL synthase family.

The enzyme catalyses (2S)-2-hydroxy-3-oxobutyl phosphate + 5-amino-6-(D-ribitylamino)uracil = 6,7-dimethyl-8-(1-D-ribityl)lumazine + phosphate + 2 H2O + H(+). It participates in cofactor biosynthesis; riboflavin biosynthesis; riboflavin from 2-hydroxy-3-oxobutyl phosphate and 5-amino-6-(D-ribitylamino)uracil: step 1/2. Catalyzes the formation of 6,7-dimethyl-8-ribityllumazine by condensation of 5-amino-6-(D-ribitylamino)uracil with 3,4-dihydroxy-2-butanone 4-phosphate. This is the penultimate step in the biosynthesis of riboflavin. The polypeptide is 6,7-dimethyl-8-ribityllumazine synthase (Prochlorococcus marinus (strain NATL1A)).